The following is a 164-amino-acid chain: MEKVFERLMYASRWIMAPIYLGLSLILFALGVKFFQEIFHLLPNIFKIGEVDLVLLTLSLIDITLVGGLIVMVMFSGYENFVSQLDVGEDNDKLSWLGKMDAGSLKNKVAASIVAISSIHLLKVFMNAENISNDKIMWYLLIHITFVLSAFAMGYLDKITRTGK.

4 consecutive transmembrane segments (helical) span residues 15–35, 53–73, 109–129, and 136–156; these read IMAP…VKFF, LVLL…IVMV, VAAS…MNAE, and IMWY…MGYL.

Belongs to the UPF0114 family.

Its subcellular location is the cell membrane. The protein is UPF0114 protein Sbal_0780 of Shewanella baltica (strain OS155 / ATCC BAA-1091).